The primary structure comprises 248 residues: 1-(5-phosphoribosyl)-5-[(5-phosphoribosylamino)methylideneamino] imidazole-4-carboxamide isomerase (248 aa).

Asp8 functions as the Proton acceptor in the catalytic mechanism. The active-site Proton donor is Asp129.

This sequence belongs to the HisA/HisF family.

It is found in the cytoplasm. The enzyme catalyses 1-(5-phospho-beta-D-ribosyl)-5-[(5-phospho-beta-D-ribosylamino)methylideneamino]imidazole-4-carboxamide = 5-[(5-phospho-1-deoxy-D-ribulos-1-ylimino)methylamino]-1-(5-phospho-beta-D-ribosyl)imidazole-4-carboxamide. Its pathway is amino-acid biosynthesis; L-histidine biosynthesis; L-histidine from 5-phospho-alpha-D-ribose 1-diphosphate: step 4/9. This chain is 1-(5-phosphoribosyl)-5-[(5-phosphoribosylamino)methylideneamino] imidazole-4-carboxamide isomerase, found in Desulfitobacterium hafniense (strain Y51).